Consider the following 210-residue polypeptide: Large ribosomal subunit protein uL4 (210 aa).

Residues 46-85 (QGTASTLTRSEVRGGGRKPYKQKGTGRARQGSIRTPLRPG) are disordered. Residues 60 to 71 (GGRKPYKQKGTG) are compositionally biased toward basic residues.

It belongs to the universal ribosomal protein uL4 family. As to quaternary structure, part of the 50S ribosomal subunit.

Functionally, one of the primary rRNA binding proteins, this protein initially binds near the 5'-end of the 23S rRNA. It is important during the early stages of 50S assembly. It makes multiple contacts with different domains of the 23S rRNA in the assembled 50S subunit and ribosome. In terms of biological role, forms part of the polypeptide exit tunnel. The protein is Large ribosomal subunit protein uL4 of Prochlorococcus marinus (strain AS9601).